The chain runs to 346 residues: NADH-quinone oxidoreductase subunit H (346 aa).

The next 8 helical transmembrane spans lie at 6–26 (ILFW…ACAY), 76–96 (IMYL…WSVV), 128–148 (ILFL…AGWA), 166–186 (ISYE…TGSL), 198–218 (LWNI…VAMF), 260–280 (ITMS…PFGI), 289–309 (LFGL…FVWV), and 324–344 (LGWK…SLYI).

This sequence belongs to the complex I subunit 1 family. In terms of assembly, NDH-1 is composed of 14 different subunits. Subunits NuoA, H, J, K, L, M, N constitute the membrane sector of the complex.

The protein resides in the cell inner membrane. It carries out the reaction a quinone + NADH + 5 H(+)(in) = a quinol + NAD(+) + 4 H(+)(out). In terms of biological role, NDH-1 shuttles electrons from NADH, via FMN and iron-sulfur (Fe-S) centers, to quinones in the respiratory chain. The immediate electron acceptor for the enzyme in this species is believed to be ubiquinone. Couples the redox reaction to proton translocation (for every two electrons transferred, four hydrogen ions are translocated across the cytoplasmic membrane), and thus conserves the redox energy in a proton gradient. This subunit may bind ubiquinone. This chain is NADH-quinone oxidoreductase subunit H, found in Leptospira borgpetersenii serovar Hardjo-bovis (strain JB197).